Reading from the N-terminus, the 777-residue chain is Semaphorin-4F (777 aa).

An N-terminal signal peptide occupies residues 1–40 (MLARAERPRPGPRPPPVSLFPPPSSLLLLLLAMLSAPVCG). Residues 41 to 667 (RVPRSVPRTS…PANRAHTVVG (627 aa)) lie on the Extracellular side of the membrane. In terms of domain architecture, Sema spans 48–516 (RTSLPISEAD…SHTEVTQVNT (469 aa)). Asn-70 carries an N-linked (GlcNAc...) asparagine glycan. Cys-118 and Cys-128 are oxidised to a cystine. Asn-139 is a glycosylation site (N-linked (GlcNAc...) asparagine). Disulfide bonds link Cys-146-Cys-155, Cys-279-Cys-390, and Cys-303-Cys-349. Asn-515 is a glycosylation site (N-linked (GlcNAc...) asparagine). The PSI domain occupies 518–569 (NCGRLQSCSECILAQDPVCAWSFRLDACVAHAGEHRGMVQDIESADVSSLCP). 3 disulfides stabilise this stretch: Cys-519–Cys-536, Cys-528–Cys-545, and Cys-593–Cys-634. Positions 586–641 (VGHVVLPCSPSSAWASCVWHQPSGVTSLTPRRDGLEVVVTPGAMGAYACECQEGGA) constitute an Ig-like C2-type domain. A helical transmembrane segment spans residues 668–688 (AGLVGFFLGVLAASLTLLLIG). At 689–777 (RRQQRRRQRE…PLATCDETSI (89 aa)) the chain is on the cytoplasmic side. The tract at residues 703 to 742 (DKVGLDLGAPPSGTTSYSQDPPSPSPEDERLPLALGKRGS) is disordered. Phosphoserine is present on residues Ser-725 and Ser-727. Positions 775–777 (TSI) match the PDZ-binding motif.

Belongs to the semaphorin family. Interacts (via PDZ-binding motif) with DLG4/SAP90 (via PDZ domain 2); this interaction may promote translocation of DLG4/SAP90 to the membrane. Expressed throughout the adult brain, where it shows particularly strong expression in the hippocampus, corpus callosum, granular layer and deep nuclei of the cerebellum, and the mitral layer of the olfactory bulb (at protein level). At the cellular level, detected in neuronal precursors, postmitotic neurons, pyramidal neurons, and glial cells including mature oligodendocytes and oligodendroglial precursor cells (at protein level).

It is found in the cell membrane. The protein resides in the postsynaptic density. It localises to the perikaryon. Its subcellular location is the cell projection. The protein localises to the dendrite. Probable cell surface receptor that regulates oligodendroglial precursor cell migration. Might also regulate differentiation of oligodendroglial precursor cells. Has growth cone collapse activity against retinal ganglion-cell axons. The polypeptide is Semaphorin-4F (Sema4f) (Mus musculus (Mouse)).